Consider the following 202-residue polypeptide: Nuclear transcription factor Y subunit C-6 (202 aa).

Residues 1-16 (MAENNNNNGDNMNNDN) are compositionally biased toward low complexity. Disordered regions lie at residues 1–29 (MAENNNNNGDNMNNDNHQQPPSYSQLPPM) and 180–202 (AWPAAAGDGEDDAEDNGGNGGGN). The span at 17 to 29 (HQQPPSYSQLPPM) shows a compositional bias: polar residues.

It belongs to the NFYC/HAP5 subunit family. As to quaternary structure, heterotrimeric transcription factor composed of three components, NF-YA, NF-YB and NF-YC. NF-YB and NF-YC must interact and dimerize for NF-YA association and DNA binding. Expressed in flowers and siliques.

Its subcellular location is the nucleus. Stimulates the transcription of various genes by recognizing and binding to a CCAAT motif in promoters. The chain is Nuclear transcription factor Y subunit C-6 (NFYC6) from Arabidopsis thaliana (Mouse-ear cress).